Reading from the N-terminus, the 292-residue chain is ATP synthase subunit a (292 aa).

Transmembrane regions (helical) follow at residues 37–57, 96–116, 144–164, 192–212, 230–250, and 263–283; these read IDSVVVGLVLGAIALFAFWLC, FIAPLALTVFVWIFLMNAMDM, VVPTADLSTTLGLSTAVLVLC, PVFALILGVVNLLMQIIEYVA, LVFMLIALMGGAAAMSLSGVL, and AIFHILVITLQAFIFMMLALI.

The protein belongs to the ATPase A chain family. F-type ATPases have 2 components, CF(1) - the catalytic core - and CF(0) - the membrane proton channel. CF(1) has five subunits: alpha(3), beta(3), gamma(1), delta(1), epsilon(1). CF(0) has three main subunits: a(1), b(2) and c(9-12). The alpha and beta chains form an alternating ring which encloses part of the gamma chain. CF(1) is attached to CF(0) by a central stalk formed by the gamma and epsilon chains, while a peripheral stalk is formed by the delta and b chains.

It localises to the cell inner membrane. Its function is as follows. Key component of the proton channel; it plays a direct role in the translocation of protons across the membrane. The chain is ATP synthase subunit a from Paracidovorax citrulli (strain AAC00-1) (Acidovorax citrulli).